A 398-amino-acid chain; its full sequence is Elongation factor Tu (398 aa).

A tr-type G domain is found at 10–207; it reads KPHVNIGTIG…TVDEYIPEPE (198 aa). The interval 19 to 26 is G1; sequence GHVDHGKT. 19–26 is a GTP binding site; sequence GHVDHGKT. Threonine 26 contributes to the Mg(2+) binding site. The G2 stretch occupies residues 63-67; sequence GITIN. The segment at 84–87 is G3; it reads DAPG. GTP-binding positions include 84–88 and 139–142; these read DAPGH and NKVD. The G4 stretch occupies residues 139 to 142; sequence NKVD. Residues 177–179 are G5; the sequence is SAL.

It belongs to the TRAFAC class translation factor GTPase superfamily. Classic translation factor GTPase family. EF-Tu/EF-1A subfamily. In terms of assembly, monomer.

It is found in the cytoplasm. It catalyses the reaction GTP + H2O = GDP + phosphate + H(+). In terms of biological role, GTP hydrolase that promotes the GTP-dependent binding of aminoacyl-tRNA to the A-site of ribosomes during protein biosynthesis. The sequence is that of Elongation factor Tu from Streptococcus sanguinis (strain SK36).